Reading from the N-terminus, the 202-residue chain is Glycerol-3-phosphate acyltransferase (202 aa).

Helical transmembrane passes span 6 to 26 (LTLG…AVLV), 56 to 76 (SAAL…YIAF), 82 to 102 (SVSL…PIFF), 118 to 138 (APIG…MVLI), and 141 to 161 (YSSL…WYLD).

The protein belongs to the PlsY family. As to quaternary structure, probably interacts with PlsX.

It localises to the cell inner membrane. It carries out the reaction an acyl phosphate + sn-glycerol 3-phosphate = a 1-acyl-sn-glycero-3-phosphate + phosphate. It participates in lipid metabolism; phospholipid metabolism. Its function is as follows. Catalyzes the transfer of an acyl group from acyl-phosphate (acyl-PO(4)) to glycerol-3-phosphate (G3P) to form lysophosphatidic acid (LPA). This enzyme utilizes acyl-phosphate as fatty acyl donor, but not acyl-CoA or acyl-ACP. The chain is Glycerol-3-phosphate acyltransferase from Shewanella woodyi (strain ATCC 51908 / MS32).